The primary structure comprises 338 residues: Mitoferrin-1 (338 aa).

The disordered stretch occupies residues 1–37 (MELRRGGVGNQAAGRRMDGDCRDGGCGSKDAGSEDYE). Solcar repeat units follow at residues 43–131 (ASVS…MKRT), 141–225 (NSHL…LQEQ), and 232–326 (YNPQ…FKYI). 6 helical membrane passes run 45-64 (VSTH…SIMY), 106-125 (GLNV…FACY), 143-162 (HLAN…AVMN), 200-219 (SYTT…FITY), 234-253 (PQSH…AATT), and 301-320 (GIQA…WSVY).

It belongs to the mitochondrial carrier (TC 2.A.29) family. In terms of assembly, interacts with ACB10; this interaction stabilizes SLC25A37 and enhances the function of SLC25A37 to import mitochondrial iron during erythroid differentiation. As to expression, highly expressed in hematopoietic organs, fetal liver, bone marrow and spleen.

The protein resides in the mitochondrion inner membrane. The catalysed reaction is Fe(2+)(in) = Fe(2+)(out). Mitochondrial iron transporter that specifically mediates iron uptake in developing erythroid cells, thereby playing an essential role in heme biosynthesis. This Mus musculus (Mouse) protein is Mitoferrin-1 (Slc25a37).